The primary structure comprises 1045 residues: Desmoglein-1 (1045 aa).

A signal peptide spans 1–23 (MNWPFFRTAAVLFIFLVVLEVNS). Residues 24 to 49 (EFRIQVRDYNTKNGTIKWHSIRRQKR) constitute a propeptide that is removed on maturation. N-linked (GlcNAc...) asparagine glycans are attached at residues Asn-36, Asn-110, and Asn-180. Cadherin domains follow at residues 50–158 (EWIK…PVFS), 159–270 (MSTF…PYME), 271–385 (LPSN…GSVF), and 386–496 (RPGS…TDGA). Over 50–546 (EWIKFAAACR…HPLDNVHFGP (497 aa)) the chain is Extracellular. Residues 547–567 (AGIGLLIMGFLVLGLVPFLLM) traverse the membrane as a helical segment. Over 568–1045 (YCDCGGAPGG…TKYSTVQYTK (478 aa)) the chain is Cytoplasmic. 5 Desmoglein repeat repeats span residues 814–840 (TYPSGPGVHHPMPIPDPLSYGNVTMTE), 841–870 (SYTTSGILKPSVHVHDNRQASNVVVTERVV), 871–900 (GPISGANLHGMLEMPDLRDGSNVIVTERVI), 901–928 (APNSSLPTTLTIPDPRESSNVVVTERVI), and 929–957 (RPTSGIVGNLSMHPDISNTHNVIVTERVV). The disordered stretch occupies residues 1019-1045 (FSNTLGSASPTTTRSRITKYSTVQYTK). Residues 1020 to 1045 (SNTLGSASPTTTRSRITKYSTVQYTK) show a composition bias toward polar residues.

Binds to JUP/plakoglobin. Interacts with PKP2. Interacts with DSC3; there is evidence to suggest that the interaction promotes cell-cell adhesion of keratinocytes.

It localises to the cell membrane. The protein resides in the cell junction. Its subcellular location is the desmosome. The protein localises to the cytoplasm. It is found in the nucleus. Component of intercellular desmosome junctions. Involved in the interaction of plaque proteins and intermediate filaments mediating cell-cell adhesion. The sequence is that of Desmoglein-1 (DSG1) from Sus scrofa (Pig).